The following is a 117-amino-acid chain: Appetite-regulating hormone (117 aa).

A signal peptide spans 1 to 23 (MPSPGTVCSLLLLGMLWLDLAMA). Residue S26 is the site of O-decanoyl serine; alternate attachment. Residue S26 is the site of O-hexanoyl serine; alternate attachment. S26 carries O-octanoyl serine; alternate lipidation. Positions 29–50 (SPEHQRVQQRKESKKPPAKLQP) are disordered. Over residues 31–43 (EHQRVQQRKESKK) the composition is skewed to basic and acidic residues. The propeptide at 52–75 (ALAGWLRPEDGGQAEGAEDELEVR) is removed in mature form. L98 carries the post-translational modification Leucine amide. A propeptide spans 99-117 (GKFLQDILWEEAKEAPADK) (removed in mature form).

This sequence belongs to the motilin family. Post-translationally, O-octanoylated by GOAT/MBOAT4. O-octanoylation or O-decanoylation is essential for ghrelin activity. The O-decanoylated forms Ghrelin-27-C10 and Ghrelin-28-C10 differ in the length of the carbon backbone of the carboxylic acid bound to Ser-26. A small fraction of ghrelin, ghrelin-28-C10:1, may be modified with a singly unsaturated carboxylic acid. Also O-acetylated and O-butyrylated on Ser-26 to minor levels. In terms of processing, amidation of Leu-98 is essential for obestatin activity. As to expression, highest level in stomach. All forms are found in serum as well. Other tissues compensate for the loss of ghrelin synthesis in the stomach following gastrectomy.

The protein localises to the secreted. In terms of biological role, ghrelin is the ligand for growth hormone secretagogue receptor type 1 (GHSR). Induces the release of growth hormone from the pituitary. Has an appetite-stimulating effect, induces adiposity and stimulates gastric acid secretion. Involved in growth regulation. May be the ligand for GPR39. May have an appetite-reducing effect resulting in decreased food intake. May reduce gastric emptying activity and jejunal motility. This chain is Appetite-regulating hormone (GHRL), found in Homo sapiens (Human).